A 793-amino-acid chain; its full sequence is Transcription factor castor (793 aa).

A compositionally biased stretch (polar residues) spans 44 to 53 (NEDISSSTSV). Disordered stretches follow at residues 44 to 101 (NEDI…NLIA), 199 to 259 (VTST…HTNA), and 272 to 296 (LESTTDSLDSPSMYTPVKQPADSSY). Composition is skewed to low complexity over residues 54-68 (QQQQQQQQEQLQQPQ), 81-98 (SSQNTNCSSSRSCSPNSN), and 210-221 (ATPAPSAGATAG). Threonine 211 is modified (phosphothreonine). Serine 215 is subject to Phosphoserine. Residues 233-242 (ESADDDEDDD) show a composition bias toward acidic residues. The span at 245 to 254 (LSSLTSCSSS) shows a compositional bias: low complexity. A compositionally biased stretch (polar residues) spans 273 to 284 (ESTTDSLDSPSM). The C2H2-type 1; atypical zinc-finger motif lies at 377–402 (FHCHEEPCQGKILSKKDDIIRHLKWH). 3 consecutive C2H2-type zinc fingers follow at residues 439-463 (YHCVYEHCPKVYVSTSDVQMHANFH), 498-522 (YHCCREGCTHTFKNKADMDKHKTYH), and 556-580 (IHCVREGCDYILHSSSQMISHKRKH). A disordered region spans residues 599-682 (EESSLDAMPQ…RLKVEDESSN (84 aa)). Low complexity predominate over residues 608-629 (QQQQQQQQQQPTSLSQSQSSSS). Polar residues predominate over residues 630–644 (VCGGSNTSTPLSSLS). The a.T hook DNA-binding region spans 650–662 (ARKRGRPPKKIQL).

As to expression, expressed in a specific subset of neuroblasts in the ventral nerve cord and the procephalic region in the embryo. Expressed in many, if not all, late delaminating NBs, and in early NBs, but only after they have undergone several rounds of ganglion mother cell-producing divisions.

It localises to the nucleus. Transcription factor that specifies expression of key genes in developing central nervous system (CNS). Essential for many, if not all, late developing neuroblastoma (NB) sublineages. Binds to the 5'-[CG]C[CT][CT]AAAAA[AT]-3' DNA sequence, like hb, suggesting that cas and hb act as a late regulators in early and late CNS NB sublineage, respectively. Acts by repressing expression of nub/pdm-1 and pdm2/pdm-2 POU genes, and restrict their pattern of expression in appropriate cells. Required for a full expression of vvl/drifter and acj6/I-POU; it is however unknown whether it directly activates these genes. Controls engrailed (en) expression in the ventral nerve cord. This is Transcription factor castor (cas) from Drosophila melanogaster (Fruit fly).